The primary structure comprises 419 residues: MLGILTFILVFGIIVVVHEFGHFYFAKKSGILVREFAIGMGPKIFAHIGKDGTAYTIRILPLGGYVRMAGWGDDTTEIKTGTPVSLTLADDGKVKRINLSGKKLDQTALPMQVTQFDFEDKLFIKGLVLEEEKTFAVDHDATVVEADGTEVRIAPLDVQYQNATIWGKLITNFAGPMNNFILGVVVFWVLIFMQGGVRDVDTNQFHIMPQGALAKVGVPEMAQITKIGSHEVSNWESLIQAVETETKDKTAPTLDVTISEKGSDKQVTVTPKDSQGRYLLGVQPGVKSDFLSMFVGGFTTAADSALRILSALKNLIFQPDLNKLGGPVAIFKASSDAAKNGIENILYFLAMISINIGIFNLIPIPALDGGKIVLNILEAIRRKPLKQEIETYVTLAGVVIMVVLMIAVTWNDIMRLFFR.

His18 is a Zn(2+) binding site. Glu19 is an active-site residue. A Zn(2+)-binding site is contributed by His22. 3 consecutive transmembrane segments (helical) span residues 169–191 (LITN…WVLI), 345–367 (ILYF…IPAL), and 388–410 (EIET…AVTW).

Belongs to the peptidase M50B family. It depends on Zn(2+) as a cofactor.

It is found in the cell membrane. The chain is Putative zinc metalloprotease SP_0263 from Streptococcus pneumoniae serotype 4 (strain ATCC BAA-334 / TIGR4).